A 130-amino-acid chain; its full sequence is Small ribosomal subunit protein uS9 (130 aa).

The tract at residues 98-130 (LKRAGLLTRDPRMKERKKPGLKKARRSPQFSKR) is disordered. The span at 111–130 (KERKKPGLKKARRSPQFSKR) shows a compositional bias: basic residues.

This sequence belongs to the universal ribosomal protein uS9 family.

The protein is Small ribosomal subunit protein uS9 of Staphylococcus haemolyticus (strain JCSC1435).